A 684-amino-acid polypeptide reads, in one-letter code: Poly(A) RNA polymerase cid14 (684 aa).

3 disordered regions span residues 1-52, 64-127, and 161-219; these read MGKK…DAYD, DQEE…KRGE, and WNSD…QAYE. 5 stretches are compositionally biased toward basic and acidic residues: residues 19 to 35, 73 to 91, 108 to 127, 171 to 186, and 199 to 210; these read ERTE…DKPS, GSKK…DKGG, DPLE…KRGE, SNDK…KSSK, and FFHEANEKSDSN. Mg(2+) is bound by residues aspartate 298 and aspartate 300. 6 residues coordinate ATP: glycine 364, lysine 389, serine 407, tyrosine 408, asparagine 492, and lysine 496. One can recognise a PAP-associated domain in the interval 434–492; that stretch reads NFGVLLLEFLELYGKQFYYDAVGIAVHNGGFYFSKKKMGWLKPNQPYLLSIQDPVDFQN. Residues 623 to 684 are disordered; sequence GHENFQKQAL…SRAKKIRKRF (62 aa). Residues 628-655 show a composition bias toward polar residues; the sequence is QKQALTSTGEQSSSNSRANPSKLFNISS. Over residues 656–672 the composition is skewed to acidic residues; the sequence is DDSEDEVPIIEDTTASD.

It belongs to the DNA polymerase type-B-like family. Heterooligomer. Component of the TRAMP complex composed of at least cid14, mtr4, and air1. Mg(2+) is required as a cofactor. Requires Mn(2+) as cofactor.

Its subcellular location is the nucleus. The protein resides in the nucleolus. It catalyses the reaction RNA(n) + ATP = RNA(n)-3'-adenine ribonucleotide + diphosphate. Required for 3' polyadenylation of the 5.8S and 25S rRNAs as a prelude to their degradation in the exosome. Involved in the nucleolar organization to ensure faithful chromosome segregation during mitosis. This chain is Poly(A) RNA polymerase cid14 (cid14), found in Schizosaccharomyces pombe (strain 972 / ATCC 24843) (Fission yeast).